Reading from the N-terminus, the 469-residue chain is 3-isopropylmalate dehydratase large subunit (469 aa).

Residues C347, C407, and C410 each contribute to the [4Fe-4S] cluster site.

The protein belongs to the aconitase/IPM isomerase family. LeuC type 1 subfamily. As to quaternary structure, heterodimer of LeuC and LeuD. It depends on [4Fe-4S] cluster as a cofactor.

It carries out the reaction (2R,3S)-3-isopropylmalate = (2S)-2-isopropylmalate. The protein operates within amino-acid biosynthesis; L-leucine biosynthesis; L-leucine from 3-methyl-2-oxobutanoate: step 2/4. Its function is as follows. Catalyzes the isomerization between 2-isopropylmalate and 3-isopropylmalate, via the formation of 2-isopropylmaleate. The protein is 3-isopropylmalate dehydratase large subunit of Prochlorococcus marinus (strain MIT 9515).